A 311-amino-acid chain; its full sequence is Malate dehydrogenase (311 aa).

Residues G7 to G13 and D34 contribute to the NAD(+) site. Positions 81 and 87 each coordinate substrate. NAD(+) is bound by residues N94 and I117–N119. The substrate site is built by N119 and R153. H177 acts as the Proton acceptor in catalysis. Residue M227 coordinates NAD(+).

Belongs to the LDH/MDH superfamily. MDH type 1 family. As to quaternary structure, homodimer.

The enzyme catalyses (S)-malate + NAD(+) = oxaloacetate + NADH + H(+). Catalyzes the reversible oxidation of malate to oxaloacetate. The chain is Malate dehydrogenase from Haemophilus influenzae (strain PittGG).